Reading from the N-terminus, the 388-residue chain is GTPase Obg (388 aa).

One can recognise an Obg domain in the interval 4–162; the sequence is SNFVDYVKIY…MTVILELKLL (159 aa). Residues 18–45 form a disordered region; it reads KGGRGSTHMRREKYTPNGGPDGGDGGRG. Residues 36–45 show a composition bias toward gly residues; sequence GPDGGDGGRG. The 167-residue stretch at 163–329 folds into the OBG-type G domain; that stretch reads ADVGLVGFPN…LKDILWTELN (167 aa). GTP-binding positions include 169–176, 194–198, 216–219, 283–286, and 310–312; these read GFPNAGKS, FTTLE, DIPG, TKSD, and SSV. The Mg(2+) site is built by serine 176 and threonine 196. Residues 352 to 388 form a disordered region; the sequence is LKDMGEDEELDYEYEDDGDGDEDDLDYEYEEEDWEDK. Residues 356–388 show a composition bias toward acidic residues; it reads GEDEELDYEYEDDGDGDEDDLDYEYEEEDWEDK.

Belongs to the TRAFAC class OBG-HflX-like GTPase superfamily. OBG GTPase family. In terms of assembly, monomer. Mg(2+) is required as a cofactor.

The protein localises to the cytoplasm. Its function is as follows. An essential GTPase which binds GTP, GDP and possibly (p)ppGpp with moderate affinity, with high nucleotide exchange rates and a fairly low GTP hydrolysis rate. Plays a role in control of the cell cycle, stress response, ribosome biogenesis and in those bacteria that undergo differentiation, in morphogenesis control. The protein is GTPase Obg of Bacteroides fragilis (strain ATCC 25285 / DSM 2151 / CCUG 4856 / JCM 11019 / LMG 10263 / NCTC 9343 / Onslow / VPI 2553 / EN-2).